The primary structure comprises 328 residues: Coiled-coil domain-containing protein 54 (328 aa).

Residues 122 to 151 (TTKDILSMKEDIKALKKKVTELEKQNSYSR) are a coiled coil. The residue at position 182 (Thr-182) is a Phosphothreonine. Basic and acidic residues predominate over residues 186–197 (TDREMSSAEPEK). The segment at 186–205 (TDREMSSAEPEKVPSYPKST) is disordered.

The sequence is that of Coiled-coil domain-containing protein 54 (CCDC54) from Macaca fascicularis (Crab-eating macaque).